The following is a 689-amino-acid chain: Probable serine/threonine-protein kinase abkC (689 aa).

Positions 42–79 (NNSGNENYKNFNYNYKNKNNYNNNNNNNNSNSSSNNNG) are disordered. A Protein kinase domain is found at 257–689 (WFDEEPMASG…NNKNNNEKNK (433 aa)). ATP-binding positions include 263–271 (MASGSVAQV) and Lys-285. Asp-417 functions as the Proton acceptor in the catalytic mechanism. The disordered stretch occupies residues 652 to 689 (KQLNNDNNNNNNNNNNNKNNNDNNNKNNNNKNNNEKNK). A compositionally biased stretch (low complexity) spans 655–683 (NNDNNNNNNNNNNNKNNNDNNNKNNNNKN).

It belongs to the protein kinase superfamily. ADCK protein kinase family.

The protein is Probable serine/threonine-protein kinase abkC (abkC) of Dictyostelium discoideum (Social amoeba).